The chain runs to 110 residues: Class I hydrophobin Po.HYD (110 aa).

The signal sequence occupies residues 1 to 27 (MFSKATLFFTTVSRYRDTQAPIPTGQT). Intrachain disulfides connect Cys-35/Cys-91, Cys-42/Cys-85, Cys-43/Cys-75, and Cys-92/Cys-105.

Belongs to the fungal hydrophobin family. Self-assembles to form functional amyloid fibrils called rodlets. Self-assembly into fibrillar rodlets occurs spontaneously at hydrophobic:hydrophilic interfaces and the rodlets further associate laterally to form amphipathic monolayers.

The protein resides in the secreted. The protein localises to the cell wall. In terms of biological role, aerial growth, conidiation, and dispersal of filamentous fungi in the environment rely upon a capability of their secreting small amphipathic proteins called hydrophobins (HPBs) with low sequence identity. Class I can self-assemble into an outermost layer of rodlet bundles on aerial cell surfaces, conferring cellular hydrophobicity that supports fungal growth, development and dispersal; whereas Class II form highly ordered films at water-air interfaces through intermolecular interactions but contribute nothing to the rodlet structure. The chain is Class I hydrophobin Po.HYD from Pleurotus ostreatus (Oyster mushroom).